A 497-amino-acid chain; its full sequence is Glutamyl-tRNA(Gln) amidotransferase subunit A (497 aa).

Catalysis depends on charge relay system residues lysine 85 and serine 160. Serine 184 (acyl-ester intermediate) is an active-site residue.

The protein belongs to the amidase family. GatA subfamily. In terms of assembly, heterotrimer of A, B and C subunits.

The catalysed reaction is L-glutamyl-tRNA(Gln) + L-glutamine + ATP + H2O = L-glutaminyl-tRNA(Gln) + L-glutamate + ADP + phosphate + H(+). Allows the formation of correctly charged Gln-tRNA(Gln) through the transamidation of misacylated Glu-tRNA(Gln) in organisms which lack glutaminyl-tRNA synthetase. The reaction takes place in the presence of glutamine and ATP through an activated gamma-phospho-Glu-tRNA(Gln). This Mycobacterium leprae (strain TN) protein is Glutamyl-tRNA(Gln) amidotransferase subunit A (gatA).